Consider the following 567-residue polypeptide: WD repeat-containing protein 20 (567 aa).

Position 2 is an N-acetylalanine (alanine 2). 4 WD repeats span residues isoleucine 147–alanine 187, valine 216–lysine 257, serine 258–arginine 297, and serine 345–histidine 389. Serine 355 and serine 358 each carry phosphoserine. The segment at proline 408–alanine 441 is disordered. Composition is skewed to polar residues over residues serine 411 to asparagine 421 and arginine 429 to alanine 441. Serine 430, serine 432, and serine 463 each carry phosphoserine. Over residues lysine 468 to serine 481 the composition is skewed to basic residues. A disordered region spans residues lysine 468 to leucine 493. A WD 5 repeat occupies isoleucine 529 to glutamine 566.

As to quaternary structure, interacts with USP12; promotes translocation of USP12/WDR20 to the plasma membrane. Component of the USP12/WDR20/WDR48 deubiquitinating complex. Interacts with USP46; contributes to the cytoplasmic localization of the USP46/WDR20 complex. Component of the USP12/DMWD/WDR48 deubiquitinating complex.

It localises to the cytoplasm. Its subcellular location is the nucleus. In terms of biological role, regulator of deubiquitinating complexes. Activates deubiquitinating activity of complexes containing USP12. Anchors at the base of the ubiquitin-contacting loop of USP12 and remotely modulates the catalytic center of the enzyme. Regulates shuttling of complexes containing USP12 between the plasma membrane, cytoplasm and nucleus. In Mus musculus (Mouse), this protein is WD repeat-containing protein 20 (Wdr20).